A 173-amino-acid polypeptide reads, in one-letter code: Alpha-crystallin A chain (173 aa).

At Met1 the chain carries N-acetylmethionine. The interval 1–63 is required for complex formation with BFSP1 and BFSP2; it reads MDIAIQHPWF…RTVLDSGISE (63 aa). The residue at position 6 (Gln6) is a Deamidated glutamine; partial. Phosphoserine is present on Ser45. At Gln50 the chain carries Deamidated glutamine; partial. A sHSP domain is found at 52-162; it reads LFRTVLDSGI…GHSERAIPVS (111 aa). 2 positions are modified to N6-acetyllysine: Lys70 and Lys99. Zn(2+) is bound at residue His100. Asn101 bears the Deamidated asparagine; partial mark. Residues Glu102 and His107 each contribute to the Zn(2+) site. A Phosphoserine modification is found at Ser122. Asn123 is subject to Deamidated asparagine; partial. Residues 144–173 form a disordered region; it reads PKVPSGVDAGHSERAIPVSREEKPSSAPSS. The span at 153 to 167 shows a compositional bias: basic and acidic residues; the sequence is GHSERAIPVSREEKP. His154 serves as a coordination point for Zn(2+). Ser162 carries an O-linked (GlcNAc) serine glycan.

It belongs to the small heat shock protein (HSP20) family. As to quaternary structure, heteromer composed of three CRYAA and one CRYAB subunits. Inter-subunit bridging via zinc ions enhances stability, which is crucial as there is no protein turn over in the lens. Can also form homodimers and homotetramers (dimers of dimers) which serve as the building blocks of homooligomers. Within homooligomers, the zinc-binding motif is created from residues of 3 different molecules. His-100 and Glu-102 from one molecule are ligands of the zinc ion, and His-107 and His-154 residues from additional molecules complete the site with tetrahedral coordination geometry. Part of a complex required for lens intermediate filament formation composed of BFSP1, BFSP2 and CRYAA. Acetylation at Lys-70 may increase chaperone activity. Post-translationally, undergoes age-dependent proteolytical cleavage at the C-terminus.

The protein resides in the cytoplasm. The protein localises to the nucleus. In terms of biological role, contributes to the transparency and refractive index of the lens. Acts as a chaperone, preventing aggregation of various proteins under a wide range of stress conditions. Required for the correct formation of lens intermediate filaments as part of a complex composed of BFSP1, BFSP2 and CRYAA. This Canis lupus familiaris (Dog) protein is Alpha-crystallin A chain (CRYAA).